The sequence spans 247 residues: DNA repair protein RecO (247 aa).

Belongs to the RecO family.

Involved in DNA repair and RecF pathway recombination. The chain is DNA repair protein RecO from Caldanaerobacter subterraneus subsp. tengcongensis (strain DSM 15242 / JCM 11007 / NBRC 100824 / MB4) (Thermoanaerobacter tengcongensis).